Here is a 274-residue protein sequence, read N- to C-terminus: Nitrogenase iron protein (274 aa).

Gly-8 to Ser-15 is an ATP binding site. Residue Cys-94 participates in [4Fe-4S] cluster binding. At Arg-97 the chain carries ADP-ribosylarginine; by dinitrogenase reductase ADP-ribosyltransferase. Residue Cys-129 coordinates [4Fe-4S] cluster.

It belongs to the NifH/BchL/ChlL family. As to quaternary structure, homodimer. The cofactor is [4Fe-4S] cluster. Post-translationally, the reversible ADP-ribosylation of Arg-97 inactivates the nitrogenase reductase and regulates nitrogenase activity.

It carries out the reaction N2 + 8 reduced [2Fe-2S]-[ferredoxin] + 16 ATP + 16 H2O = H2 + 8 oxidized [2Fe-2S]-[ferredoxin] + 2 NH4(+) + 16 ADP + 16 phosphate + 6 H(+). The key enzymatic reactions in nitrogen fixation are catalyzed by the nitrogenase complex, which has 2 components: the iron protein and the molybdenum-iron protein. The polypeptide is Nitrogenase iron protein (Methanocella arvoryzae (strain DSM 22066 / NBRC 105507 / MRE50)).